Consider the following 170-residue polypeptide: uncharacterized protein (170 aa).

The interval 35–57 is disordered; the sequence is EEVMPATAPSTDPAVPKDAQEAD.

This is an uncharacterized protein from Candida tsukubaensis (Yeast).